The following is a 161-amino-acid chain: 2-C-methyl-D-erythritol 2,4-cyclodiphosphate synthase (161 aa).

2 residues coordinate a divalent metal cation: Asp-10 and His-12. Residues 10–12 and 36–37 contribute to the 4-CDP-2-C-methyl-D-erythritol 2-phosphate site; these read DVH and HS. Position 44 (His-44) interacts with a divalent metal cation. Residues 58–60, 63–67, 134–137, Phe-141, and Arg-144 contribute to the 4-CDP-2-C-methyl-D-erythritol 2-phosphate site; these read DIG, FPDTD, and TTTE.

The protein belongs to the IspF family. In terms of assembly, homotrimer. Requires a divalent metal cation as cofactor.

The catalysed reaction is 4-CDP-2-C-methyl-D-erythritol 2-phosphate = 2-C-methyl-D-erythritol 2,4-cyclic diphosphate + CMP. The protein operates within isoprenoid biosynthesis; isopentenyl diphosphate biosynthesis via DXP pathway; isopentenyl diphosphate from 1-deoxy-D-xylulose 5-phosphate: step 4/6. Its function is as follows. Involved in the biosynthesis of isopentenyl diphosphate (IPP) and dimethylallyl diphosphate (DMAPP), two major building blocks of isoprenoid compounds. Catalyzes the conversion of 4-diphosphocytidyl-2-C-methyl-D-erythritol 2-phosphate (CDP-ME2P) to 2-C-methyl-D-erythritol 2,4-cyclodiphosphate (ME-CPP) with a corresponding release of cytidine 5-monophosphate (CMP). The sequence is that of 2-C-methyl-D-erythritol 2,4-cyclodiphosphate synthase from Shewanella putrefaciens (strain CN-32 / ATCC BAA-453).